Reading from the N-terminus, the 668-residue chain is Bestrophin-3 (668 aa).

The Cytoplasmic segment spans residues 1-31; sequence MTVTYSSKVANATFFGFHRLLLKWRGSIYKL. Alanine 10 is a Ca(2+) binding site. A helical transmembrane segment spans residues 32–51; sequence LYREFIVFAVLYTAISLVYR. At 52 to 60 the chain is on the extracellular side; sequence LLLTGVQKR. Residues 61–82 traverse the membrane as a helical segment; the sequence is YFEKLSIYCDRYAEQIPVTFVL. Residues 83–237 are Cytoplasmic-facing; sequence GFYVTLVVNR…DWVGIPLVYT (155 aa). The helical transmembrane segment at 238–255 threads the bilayer; that stretch reads QVVTLAVYTFFFACLIGR. The Extracellular portion of the chain corresponds to 256–274; the sequence is QFLDPTKGYAGHDLDLYIP. Residues 275 to 288 form a helical membrane-spanning segment; it reads IFTLLQFFFYAGWL. Residues 289-668 lie on the Cytoplasmic side of the membrane; that stretch reads KVAEQLINPF…LNKETEESPK (380 aa). Residues glutamine 293, asparagine 296, aspartate 301, and aspartate 304 each contribute to the Ca(2+) site. Disordered stretches follow at residues 400 to 454, 473 to 493, and 532 to 570; these read SAHE…KKSC, RETS…VRTS, and TGVQ…VSAS. Over residues 425–436 the composition is skewed to basic and acidic residues; sequence PRDDLSPARDLL. Positions 475–489 are enriched in low complexity; it reads TSQTSTLQSLTPQSS. A compositionally biased stretch (polar residues) spans 532 to 545; it reads TGVQPSKTEQQQGP.

The protein belongs to the anion channel-forming bestrophin (TC 1.A.46) family. Calcium-sensitive chloride channel subfamily. Present in skeletal muscle and weakly in brain, spinal cord, bone marrow and retina.

The protein localises to the cell membrane. It catalyses the reaction chloride(in) = chloride(out). Ligand-gated anion channel that allows the movement of chloride monoatomic anions across cell membranes when activated by calcium (Ca2+). The chain is Bestrophin-3 from Homo sapiens (Human).